Here is a 379-residue protein sequence, read N- to C-terminus: Glutamate 5-kinase (379 aa).

Lys19 contributes to the ATP binding site. 3 residues coordinate substrate: Ser59, Asp146, and Asn158. Residues 178 to 179 (TD) and 220 to 226 (TGGMATK) each bind ATP. The region spanning 285 to 363 (SGDIVIDQGA…KDIISILGYD (79 aa)) is the PUA domain.

It belongs to the glutamate 5-kinase family.

Its subcellular location is the cytoplasm. It carries out the reaction L-glutamate + ATP = L-glutamyl 5-phosphate + ADP. It functions in the pathway amino-acid biosynthesis; L-proline biosynthesis; L-glutamate 5-semialdehyde from L-glutamate: step 1/2. Its function is as follows. Catalyzes the transfer of a phosphate group to glutamate to form L-glutamate 5-phosphate. This Vibrio vulnificus (strain YJ016) protein is Glutamate 5-kinase.